The sequence spans 470 residues: Glutamate--tRNA ligase (470 aa).

The 'HIGH' region signature appears at 15–25; the sequence is PSPTGFLHIGG. The 'KMSKS' region signature appears at 240–244; it reads KLSKR. Lys-243 contributes to the ATP binding site.

Belongs to the class-I aminoacyl-tRNA synthetase family. Glutamate--tRNA ligase type 1 subfamily. As to quaternary structure, monomer.

The protein resides in the cytoplasm. The catalysed reaction is tRNA(Glu) + L-glutamate + ATP = L-glutamyl-tRNA(Glu) + AMP + diphosphate. Its function is as follows. Catalyzes the attachment of glutamate to tRNA(Glu) in a two-step reaction: glutamate is first activated by ATP to form Glu-AMP and then transferred to the acceptor end of tRNA(Glu). In Caulobacter vibrioides (strain ATCC 19089 / CIP 103742 / CB 15) (Caulobacter crescentus), this protein is Glutamate--tRNA ligase.